A 1925-amino-acid polypeptide reads, in one-letter code: Plexin-D1 (1925 aa).

A compositionally biased stretch (low complexity) spans 1-18 (MAPRAAGGAPLSARAAAA). A disordered region spans residues 1–23 (MAPRAAGGAPLSARAAAASPPPF). The signal sequence occupies residues 1-46 (MAPRAAGGAPLSARAAAASPPPFQTPPRCPVPLLLLLLLGAARAGA). Residues 47–546 (LEIQRRFPSP…TSHQMARVKV (500 aa)) form the Sema domain. The Extracellular segment spans residues 47–1271 (LEIQRRFPSP…TLQLGGSETA (1225 aa)). Asn86 is a glycosylation site (N-linked (GlcNAc...) asparagine). Intrachain disulfides connect Cys104–Cys114 and Cys140–Cys148. Residues Asn155, Asn188, and Asn224 are each glycosylated (N-linked (GlcNAc...) asparagine). 2 cysteine pairs are disulfide-bonded: Cys322–Cys445 and Cys345–Cys389. 2 N-linked (GlcNAc...) asparagine glycosylation sites follow: Asn481 and Asn500. Cystine bridges form between Cys549-Cys566, Cys555-Cys600, Cys558-Cys575, Cys569-Cys581, and Cys637-Cys661. A glycan (N-linked (GlcNAc...) asparagine) is linked at Asn583. N-linked (GlcNAc...) asparagine glycans are attached at residues Asn696, Asn736, Asn802, Asn965, Asn1017, Asn1060, Asn1099, Asn1118, Asn1132, Asn1237, and Asn1257. IPT/TIG domains follow at residues 891 to 979 (PEIH…FSYV), 981 to 1066 (PLVH…FWYM), and 1069 to 1160 (PVIT…LDPE). Residues 1272–1292 (IIVSIVICSVLLLLSVVALFV) traverse the membrane as a helical segment. The Cytoplasmic segment spans residues 1293–1925 (FCTKSRRAER…DNIYECYSEA (633 aa)).

The protein belongs to the plexin family. In terms of assembly, interacts with NRP1 and SEMA4A. Interacts with SH3BP1; they dissociate upon SEMA3E binding to PLXND1 allowing SH3BP1 to transduce downstream signal through RAC1 inactivation. Detected at low levels in heart, placenta, lung, skeletal muscle, kidney, thymus and liver. Detected at very low levels in brain, colon, spleen, small intestine and peripheral blood leukocytes.

It localises to the cell membrane. It is found in the cell projection. The protein localises to the lamellipodium membrane. Functionally, cell surface receptor for SEMA4A and for class 3 semaphorins, such as SEMA3A, SEMA3C and SEMA3E. Plays an important role in cell-cell signaling, and in regulating the migration of a wide spectrum of cell types. Regulates the migration of thymocytes in the medulla. Regulates endothelial cell migration. Plays an important role in ensuring the specificity of synapse formation. Required for normal development of the heart and vasculature. Mediates anti-angiogenic signaling in response to SEMA3E. The protein is Plexin-D1 (PLXND1) of Homo sapiens (Human).